A 250-amino-acid polypeptide reads, in one-letter code: GTP cyclohydrolase 1 type 2 homolog (250 aa).

A divalent metal cation is bound by residues His63, His64, Asp100, His218, and Glu222.

Belongs to the GTP cyclohydrolase I type 2/NIF3 family. As to quaternary structure, homohexamer.

In Pyrococcus horikoshii (strain ATCC 700860 / DSM 12428 / JCM 9974 / NBRC 100139 / OT-3), this protein is GTP cyclohydrolase 1 type 2 homolog.